The chain runs to 556 residues: MKTDIEIAQSIELKPIVDVVEKLGISYDDLELYGKYKAKLSFDKIRAVESNPVGKLILVTAINPTPAGEGKSTLTIGLADALNKIGKKTMIAIREPSLGPVMGIKGGAAGGGYAQVLPMEDINLHFTGDMHAITTANNALSALIDNHLHQGNELGIDQRRILWKRVVDLNDRALRHVTVGLGGPLNGIPREDGFDITVASEIMAILCLATDIEDLKRRLANIVIGYRYDRTPVSVGDLQVEGALALILKDAIKPNLVQTIYGTPAFVHGGPFANIAHGCNSVLATTTALHLADYTVTEAGFGADLGAEKFLDIKTPNLPTSPDAVVIVATLRALKMNGGVAKDALTEENVEAVRAGFANLKRHVENIRKFGIPAVVAINEFVSDTEAEIAALKELCALIDVPVELASVWADGVEGGVELAETVVKTIAENPANYKRLYDNDLSVQEKIEKIVTEIYRGSKVNFEKKAQTQIAQVVQNGWDKLPICMAKTQYSFSDNPNALGAPENFEITIRELVPKLGAGFIVALTGDVMTMPGLPKRPAALNMDVESDGTVLGLF.

65–72 is a binding site for ATP; that stretch reads TPAGEGKS.

It belongs to the formate--tetrahydrofolate ligase family.

It carries out the reaction (6S)-5,6,7,8-tetrahydrofolate + formate + ATP = (6R)-10-formyltetrahydrofolate + ADP + phosphate. It participates in one-carbon metabolism; tetrahydrofolate interconversion. This chain is Formate--tetrahydrofolate ligase, found in Streptococcus pneumoniae serotype 19F (strain G54).